A 368-amino-acid polypeptide reads, in one-letter code: Probable endopolygalacturonase A (368 aa).

The first 18 residues, 1–18 (MRSVELLSLAALGSLVAA), serve as a signal peptide directing secretion. A propeptide spanning residues 19–31 (APAPSRVSDLTKR) is cleaved from the precursor. The cysteines at positions 35 and 50 are disulfide-linked. PbH1 repeat units lie at residues 140 to 162 (LEDS…SVQA), 167 to 192 (LIDI…DISE), 193 to 214 (STGV…AINS), 215 to 235 (GENI…SIGS), 244 to 265 (VKNV…RIKT), 273 to 295 (VSEV…VIEQ), and 307 to 352 (TTGV…DITG). The active-site Proton donor is D207. A disulfide bridge connects residues C209 and C225. H229 is an active-site residue. N-linked (GlcNAc...) asparagine glycosylation is present at N246. 2 disulfide bridges follow: C335–C340 and C359–C368.

It belongs to the glycosyl hydrolase 28 family.

Its subcellular location is the secreted. The catalysed reaction is (1,4-alpha-D-galacturonosyl)n+m + H2O = (1,4-alpha-D-galacturonosyl)n + (1,4-alpha-D-galacturonosyl)m.. Involved in maceration and soft-rotting of plant tissue. Hydrolyzes the 1,4-alpha glycosidic bonds of de-esterified pectate in the smooth region of the plant cell wall. This Neosartorya fischeri (strain ATCC 1020 / DSM 3700 / CBS 544.65 / FGSC A1164 / JCM 1740 / NRRL 181 / WB 181) (Aspergillus fischerianus) protein is Probable endopolygalacturonase A (pgaA).